Here is a 151-residue protein sequence, read N- to C-terminus: MTSISLDSLKPNKGARKRKTRKGRGIAAGQGASCGFGMRGQKSRSGRPTRPGFEGGQMPLYRRVPKLKHFPLVNSKSFTLINVASLNSLKEGSTVNLDSLVKTGIVTSPKYPLKVLGNGNLKVKLVVQAAAFTASAKTKIEGAGGSCEVFE.

Positions 1–58 (MTSISLDSLKPNKGARKRKTRKGRGIAAGQGASCGFGMRGQKSRSGRPTRPGFEGGQM) are disordered. Basic residues predominate over residues 13–24 (KGARKRKTRKGR). Residues 26–38 (IAAGQGASCGFGM) show a composition bias toward gly residues.

Belongs to the universal ribosomal protein uL15 family. As to quaternary structure, part of the 50S ribosomal subunit.

Functionally, binds to the 23S rRNA. The chain is Large ribosomal subunit protein uL15 from Prochlorococcus marinus (strain SARG / CCMP1375 / SS120).